Consider the following 117-residue polypeptide: Large ribosomal subunit protein bL19 (117 aa).

The protein belongs to the bacterial ribosomal protein bL19 family.

In terms of biological role, this protein is located at the 30S-50S ribosomal subunit interface and may play a role in the structure and function of the aminoacyl-tRNA binding site. This chain is Large ribosomal subunit protein bL19, found in Kineococcus radiotolerans (strain ATCC BAA-149 / DSM 14245 / SRS30216).